The sequence spans 263 residues: Phosphatidylglycerol--prolipoprotein diacylglyceryl transferase (263 aa).

4 helical membrane-spanning segments follow: residues 10–30 (VAIT…LFGF), 56–76 (MVTY…ILFY), 91–111 (IWNG…AMWL), and 117–137 (GLGF…GLFF). R139 is an a 1,2-diacyl-sn-glycero-3-phospho-(1'-sn-glycerol) binding site. 3 consecutive transmembrane segments (helical) span residues 171-191 (PSQL…LWVF), 199-219 (GHVS…VEFV), and 231-251 (FGWL…GLWL).

It belongs to the Lgt family.

It localises to the cell inner membrane. The enzyme catalyses L-cysteinyl-[prolipoprotein] + a 1,2-diacyl-sn-glycero-3-phospho-(1'-sn-glycerol) = an S-1,2-diacyl-sn-glyceryl-L-cysteinyl-[prolipoprotein] + sn-glycerol 1-phosphate + H(+). It functions in the pathway protein modification; lipoprotein biosynthesis (diacylglyceryl transfer). In terms of biological role, catalyzes the transfer of the diacylglyceryl group from phosphatidylglycerol to the sulfhydryl group of the N-terminal cysteine of a prolipoprotein, the first step in the formation of mature lipoproteins. In Nitratidesulfovibrio vulgaris (strain DP4) (Desulfovibrio vulgaris), this protein is Phosphatidylglycerol--prolipoprotein diacylglyceryl transferase.